The chain runs to 346 residues: Magnesium-chelatase 38 kDa subunit (346 aa).

34-41 (GHRGTGKS) contributes to the ATP binding site.

Belongs to the Mg-chelatase subunits D/I family.

It carries out the reaction protoporphyrin IX + Mg(2+) + ATP + H2O = Mg-protoporphyrin IX + ADP + phosphate + 3 H(+). Its pathway is porphyrin-containing compound metabolism; bacteriochlorophyll biosynthesis. In terms of biological role, involved in bacteriochlorophyll biosynthesis; introduces a magnesium ion into protoporphyrin IX to yield Mg-protoporphyrin IX. This chain is Magnesium-chelatase 38 kDa subunit (bchI), found in Chlorobaculum parvum (strain DSM 263 / NCIMB 8327) (Chlorobium vibrioforme subsp. thiosulfatophilum).